The following is a 323-amino-acid chain: Calcium homeostasis modulator protein 2 (323 aa).

Residues 1-21 (MAALIAENFRFLSLFFKSKDV) lie on the Cytoplasmic side of the membrane. Residues 14-39 (LFFKSKDVMIFNGLVALGTVGSQELF) are central pore. Residues 22-43 (MIFNGLVALGTVGSQELFSVVA) traverse the membrane as a helical segment. Over 44-52 (FHCPCSPAR) the chain is Extracellular. 2 disulfides stabilise this stretch: C46/C130 and C48/C162. Residues 53-76 (NYLYGLTAIGVPALALFLIGVILN) traverse the membrane as a helical segment. The Cytoplasmic portion of the chain corresponds to 77 to 101 (NHTWNLVAECQYRRAKNCSAAPNFL). The chain crosses the membrane as a helical span at residues 102-132 (LLSSILGRAAVAPVTWSVISLLRGEAYVCAL). Topologically, residues 133–179 (SEFVDPSSLTAGDKGFPPAHATEVLARFPCGEGPANLSSFREEVSRR) are extracellular. Residues 145-152 (DKGFPPAH) form a hemichannel docking region. Residues 180-206 (LKYESQLFGWLLIGVVAILVFLTKCLK) form a helical membrane-spanning segment. Topologically, residues 207-323 (HYCSPLSYRQ…DNVEMALLTA (117 aa)) are cytoplasmic. An intersubunit interaction region spans residues 214–251 (YRQEAYWAQYRTNEDQLFQRTAEVHSRVLAANNVRRFF).

The protein belongs to the CALHM family. In terms of assembly, homo-undecamer. Two undecameric hemichannels can assemble in a head-to-head manner to form a gap junction. Neuron, astrocyte, and microglia.

Its subcellular location is the cell membrane. It catalyses the reaction ATP(in) = ATP(out). Inhibited by divalent cations such as Co(2+) and Ni(2+). Functionally, pore-forming subunit of Ca(2+) homeostasis modulator channels. Mediates ATP release from astrocytes and ATP-induced Ca(2+) influx in microglia thus regulating neuronal ATP and Ca(2+) homeostasis, synaptic transmission and neuroinflammatory response. May form intercellular gap junctions. The gating mechanism remains unknown. This chain is Calcium homeostasis modulator protein 2, found in Mus musculus (Mouse).